Consider the following 435-residue polypeptide: Eukaryotic translation initiation factor 3 subunit E (435 aa).

The 174-residue stretch at F219 to L392 folds into the PCI domain.

The protein belongs to the eIF-3 subunit E family. As to quaternary structure, component of the eukaryotic translation initiation factor 3 (eIF-3) complex. The eIF-3 complex interacts with pix. Interacts with mxt.

It localises to the cytoplasm. Functionally, component of the eukaryotic translation initiation factor 3 (eIF-3) complex, which is involved in protein synthesis of a specialized repertoire of mRNAs and, together with other initiation factors, stimulates binding of mRNA and methionyl-tRNAi to the 40S ribosome. The eIF-3 complex specifically targets and initiates translation of a subset of mRNAs involved in cell proliferation. This chain is Eukaryotic translation initiation factor 3 subunit E (eIF3-S6), found in Drosophila erecta (Fruit fly).